We begin with the raw amino-acid sequence, 182 residues long: Oligoribonuclease (182 aa).

Residues 8 to 171 enclose the Exonuclease domain; sequence LIWIDLEMTG…DDIRESIKEL (164 aa). The active site involves Tyr129.

The protein belongs to the oligoribonuclease family.

It localises to the cytoplasm. Functionally, 3'-to-5' exoribonuclease specific for small oligoribonucleotides. In Haemophilus influenzae (strain PittGG), this protein is Oligoribonuclease.